A 511-amino-acid polypeptide reads, in one-letter code: Aminotransferase FGSG_17085 (511 aa).

165-166 serves as a coordination point for pyridoxal 5'-phosphate; that stretch reads GA. Tyr200 serves as a coordination point for substrate. Asp310 serves as a coordination point for pyridoxal 5'-phosphate. Lys339 is modified (N6-(pyridoxal phosphate)lysine). A substrate-binding site is contributed by Gly371. 372–373 is a binding site for pyridoxal 5'-phosphate; the sequence is HT.

Belongs to the class-III pyridoxal-phosphate-dependent aminotransferase family. Pyridoxal 5'-phosphate is required as a cofactor.

It participates in secondary metabolite biosynthesis. In terms of biological role, aminotransferase; part of the gene cluster that mediates the biosynthesis of the lipopeptide fusaristatin A. Fusaristatin A consists of a polyketide chain linked to three amino acid residues glutamine (Gln), dehydroalanine (dehydro-Ala), and beta-aminoisobutyric acid. The biosynthesis starts with formation of a linear polyketide chain by the highly reducing polyketide synthase PKS6. The gene cluster does not contain an acyl-CoA ligase or an acyl-transferase, and it is therefore predicted that the polyketide is transferred directly to the nonribosomal peptide synthetase NRPS7. Modules 1-3 from NRPS7 incorporate dehydro-Ala, Gln, and beta-aminoisobutyric acid in the compound, which is released by cyclization. The beta-aminoisobutyric acid units are most likely not freely available to the NRPS, but can be synthesized from thymine, which requires a dehydrogenase, a monooxygenase, and an aminotransferase. The fusaristatin A cluster contains a cytochrome P450 monooxygenase (FGSG_08207) and an aminotransferase (FGSG_17085), which theoretically can perform two of the enzymatic steps. The enzymes may however also be involved in biosynthesis of dehydroalanine or modification of the polyketide. The dehydro-Ala residue can be a result of cyclization, where serine is dehydrated. The last gene of the cluster encodes a protein with an A/B barrel domain found in variable enzymes, which hampers functional prediction. This is Aminotransferase FGSG_17085 from Gibberella zeae (strain ATCC MYA-4620 / CBS 123657 / FGSC 9075 / NRRL 31084 / PH-1) (Wheat head blight fungus).